The primary structure comprises 331 residues: Serpentine receptor class alpha-1 (331 aa).

Transmembrane regions (helical) follow at residues 22-42 (FAVFCSQLSIISTFILSVIAV), 57-77 (IILVFNFVYANIHQFMYAIIS), 104-124 (YTEVLYVGISGMIYSQTGILI), 143-163 (VGIIISTFVLIMSIATYQIII), 189-209 (FLFIALILTFVNLISSAAVMF), 238-258 (ICVVCMAQFVTMLVYSSGVLI), and 274-294 (LITWVYTVQYNALLFPLILIF).

Belongs to the nematode receptor-like protein sra family.

Its subcellular location is the membrane. The chain is Serpentine receptor class alpha-1 (sra-1) from Caenorhabditis elegans.